A 266-amino-acid polypeptide reads, in one-letter code: Methionine aminopeptidase 1 (266 aa).

Residue His88 participates in substrate binding. Residues Asp106, Asp117, and His186 each coordinate a divalent metal cation. Residue His193 participates in substrate binding. Positions 219 and 250 each coordinate a divalent metal cation.

The protein belongs to the peptidase M24A family. Methionine aminopeptidase type 1 subfamily. Monomer. Requires Co(2+) as cofactor. Zn(2+) serves as cofactor. It depends on Mn(2+) as a cofactor. Fe(2+) is required as a cofactor.

It catalyses the reaction Release of N-terminal amino acids, preferentially methionine, from peptides and arylamides.. Its function is as follows. Removes the N-terminal methionine from nascent proteins. The N-terminal methionine is often cleaved when the second residue in the primary sequence is small and uncharged (Met-Ala-, Cys, Gly, Pro, Ser, Thr, or Val). Requires deformylation of the N(alpha)-formylated initiator methionine before it can be hydrolyzed. The sequence is that of Methionine aminopeptidase 1 from Mycobacterium tuberculosis (strain CDC 1551 / Oshkosh).